Here is a 624-residue protein sequence, read N- to C-terminus: Cilia- and flagella-associated protein 206 (624 aa).

It belongs to the CFAP206 family.

Its subcellular location is the cytoplasm. It localises to the cytoskeleton. The protein localises to the cilium axoneme. It is found in the cilium basal body. Functionally, essential for sperm motility and is involved in the regulation of the beating frequency of motile cilia on the epithelial cells of the respiratory tract. Required for the establishment of radial spokes in sperm flagella. The protein is Cilia- and flagella-associated protein 206 (cfap206) of Danio rerio (Zebrafish).